Consider the following 896-residue polypeptide: MTEESEETVLYIEHRYVCSECNQLYGSLEEVLMHQNSHVPQQHFELVGVADPGVTVAAEAASGTGLYQTLVQESQYQCLECGQLLMSPSQLLEHQELHLKMMAPQEAVPAEPPPKAPALSSSTIHYECVDCKALFASQELWLNHRQTHLRATPTKPPTPVVLGSPVVVGSPVGQTRVAVEHSYRKAEEGGEGAAVPSAAATTTEVVTEVELLLYKCSECSQLFQLPADFLEHQATHFPAPAPESEEPVLQQETLTPAPVEVPVSQPEPVPSSDHSYELRNGEALGRDRRGRRARRNNSGEPGGAATQELFCSACDQLFLSPHQLQQHLRSHREGVFKCPLCSRVFPSPSSLDQHLGDHSSESHFLCVDCGLAFGTEALLLAHRRAHTPNPLHSCPCGKTFVNLTKFLYHRRTHGVGGVPLPTTPVPPEEPVLGFPEPAPAETGEPEAPEPPVAEESSAEPAAPGTYRCLLCSREFGKALQLTRHQRFVHRLERRHKCSICGKMFKKKSHVRNHLRTHTGERPFPCPDCSKPFNSPANLARHRLTHTGERPYRCGDCGKAFTQSSTLRQHRLVHAQHFPYRCQECGVRFHRPYRLLMHRYHHTGEYPYKCRECPRSFLLRRLLEVHQLVAHAGRQPHRCSSCGAAFPSSLRLREHRCAAAAAQAPRRFECGTCGKKVGSAARLQAHEAAHAAAGPGEVLAKEPPAPRAPRAARTPITSPTTLGSAAPAAPAAPARRRGLECSECKKLFSTETSLQVHRRIHTGERPYPCPDCGKAFRQSTHLKDHRRLHTGERPFACEVCGKAFAISMRLAEHRRIHTGERPYSCPDCGKSYRSFSNLWKHRKTHQQQHQAAVRQQLAEAEAAVGLAVMETAVEALPLVEAIEIYPLAEAEGVQISG.

3 C2H2-type zinc fingers span residues 16–38, 76–98, and 126–148; these read YVCS…QNSH, YQCL…QELH, and YECV…RQTH. Ser164 is subject to Phosphoserine. A C2H2-type 4 zinc finger spans residues 214-236; that stretch reads YKCSECSQLFQLPADFLEHQATH. The segment covering 259–272 has biased composition (low complexity); sequence VEVPVSQPEPVPSS. A disordered region spans residues 259–303; that stretch reads VEVPVSQPEPVPSSDHSYELRNGEALGRDRRGRRARRNNSGEPGG. Residues 274–287 are compositionally biased toward basic and acidic residues; it reads HSYELRNGEALGRD. The residue at position 298 (Ser298) is a Phosphoserine. 4 C2H2-type zinc fingers span residues 309-331, 336-358, 364-386, and 392-413; these read LFCS…LRSH, FKCP…LGDH, FLCV…RRAH, and HSCP…RRTH. The segment at 434–460 is disordered; sequence FPEPAPAETGEPEAPEPPVAEESSAEP. C2H2-type zinc fingers lie at residues 466–489, 495–517, 523–545, 551–573, 579–601, and 607–630; these read YRCL…RFVH, HKCS…LRTH, FPCP…RLTH, YRCG…RLVH, YRCQ…RYHH, and YKCR…LVAH. The segment at 636-659 adopts a C2H2-type 15; degenerate zinc-finger fold; the sequence is HRCSSCGAAFPSSLRLREHRCAAA. The segment at 667 to 689 adopts a C2H2-type 16 zinc-finger fold; sequence FECGTCGKKVGSAARLQAHEAAH. Residues 687–733 form a disordered region; it reads AAHAAAGPGEVLAKEPPAPRAPRAARTPITSPTTLGSAAPAAPAAPA. The span at 707–732 shows a compositional bias: low complexity; that stretch reads APRAARTPITSPTTLGSAAPAAPAAP. A Phosphoserine modification is found at Ser717. C2H2-type zinc fingers lie at residues 738–760, 766–788, 794–816, and 822–844; these read LECS…RRIH, YPCP…RRLH, FACE…RRIH, and YSCP…RKTH. Position 832 is an asymmetric dimethylarginine (Arg832).

The protein belongs to the krueppel C2H2-type zinc-finger protein family.

The protein resides in the nucleus. In terms of biological role, may be involved in transcriptional regulation. This is Zinc finger protein 574 (ZNF574) from Bos taurus (Bovine).